The chain runs to 500 residues: Probable cytosol aminopeptidase (500 aa).

Positions 269 and 274 each coordinate Mn(2+). Residue lysine 281 is part of the active site. Mn(2+) is bound by residues aspartate 292, aspartate 351, and glutamate 353. Residue arginine 355 is part of the active site.

Belongs to the peptidase M17 family. Mn(2+) is required as a cofactor.

It localises to the cytoplasm. The catalysed reaction is Release of an N-terminal amino acid, Xaa-|-Yaa-, in which Xaa is preferably Leu, but may be other amino acids including Pro although not Arg or Lys, and Yaa may be Pro. Amino acid amides and methyl esters are also readily hydrolyzed, but rates on arylamides are exceedingly low.. It carries out the reaction Release of an N-terminal amino acid, preferentially leucine, but not glutamic or aspartic acids.. In terms of biological role, presumably involved in the processing and regular turnover of intracellular proteins. Catalyzes the removal of unsubstituted N-terminal amino acids from various peptides. In Acidithiobacillus ferrooxidans (strain ATCC 23270 / DSM 14882 / CIP 104768 / NCIMB 8455) (Ferrobacillus ferrooxidans (strain ATCC 23270)), this protein is Probable cytosol aminopeptidase.